A 147-amino-acid polypeptide reads, in one-letter code: Hordoindoline-B1 (147 aa).

The first 19 residues, 1–19 (MKTLFLLAILALVASTTFA), serve as a signal peptide directing secretion. Positions 20–28 (QYSVGGGYN) are excised as a propeptide.

In terms of processing, five disulfide bonds are present. As to expression, found in endosperm and aleurone layer of developing kernels, but not in the embryo.

The protein resides in the membrane. It localises to the secreted. The protein localises to the extracellular space. Its function is as follows. Acts as a membranotoxin, probably through its antibacterial and antifungal activities, contributing to the defense mechanism of the plant against predators. Forms monovalent cation-selective ion channels in membranes. Contributes to grain texture and hardness. This is Hordoindoline-B1 (HINB-1) from Hordeum vulgare (Barley).